Reading from the N-terminus, the 355-residue chain is Peptide chain release factor 1 (355 aa).

An N5-methylglutamine modification is found at Q231. Residues 280 to 291 (SERLAKESEARK) are compositionally biased toward basic and acidic residues. The segment at 280-303 (SERLAKESEARKSQVGSGDRSERI) is disordered.

It belongs to the prokaryotic/mitochondrial release factor family. Post-translationally, methylated by PrmC. Methylation increases the termination efficiency of RF1.

Its subcellular location is the cytoplasm. Its function is as follows. Peptide chain release factor 1 directs the termination of translation in response to the peptide chain termination codons UAG and UAA. The polypeptide is Peptide chain release factor 1 (Campylobacter jejuni subsp. jejuni serotype O:2 (strain ATCC 700819 / NCTC 11168)).